We begin with the raw amino-acid sequence, 421 residues long: C2H2 type master regulator of conidiophore development brlA (421 aa).

Positions T228–T242 are enriched in polar residues. A disordered region spans residues T228 to D247. 2 consecutive C2H2-type zinc fingers follow at residues F309 to H333 and H339 to H364. Over residues T361–R370 the composition is skewed to basic residues. Positions T361–D421 are disordered.

Its subcellular location is the nucleus. In terms of biological role, brlA, abaA and wetA are pivotal regulators of conidiophore development and conidium maturation. They act individually and together to regulate their own expression and that of numerous other sporulation-specific genes. Binds promoters of target genes at brlA response elements (BREs) containing the conserved sequence 5'-(C/A)(A/G)AGGG(G/A)-3'. The polypeptide is C2H2 type master regulator of conidiophore development brlA (Aspergillus parasiticus (strain ATCC 56775 / NRRL 5862 / SRRC 143 / SU-1)).